The sequence spans 165 residues: Chorismate pyruvate-lyase (165 aa).

Positions 35, 77, 115, and 156 each coordinate substrate.

It belongs to the UbiC family. Monomer.

The protein resides in the cytoplasm. The enzyme catalyses chorismate = 4-hydroxybenzoate + pyruvate. It participates in cofactor biosynthesis; ubiquinone biosynthesis. Removes the pyruvyl group from chorismate, with concomitant aromatization of the ring, to provide 4-hydroxybenzoate (4HB) for the ubiquinone pathway. This chain is Chorismate pyruvate-lyase, found in Escherichia coli O157:H7.